We begin with the raw amino-acid sequence, 201 residues long: Probable chemoreceptor glutamine deamidase CheD 2 (201 aa).

Belongs to the CheD family.

The enzyme catalyses L-glutaminyl-[protein] + H2O = L-glutamyl-[protein] + NH4(+). Probably deamidates glutamine residues to glutamate on methyl-accepting chemotaxis receptors (MCPs), playing an important role in chemotaxis. The polypeptide is Probable chemoreceptor glutamine deamidase CheD 2 (Chromobacterium violaceum (strain ATCC 12472 / DSM 30191 / JCM 1249 / CCUG 213 / NBRC 12614 / NCIMB 9131 / NCTC 9757 / MK)).